The sequence spans 230 residues: Large ribosomal subunit protein uL1 (230 aa).

The protein belongs to the universal ribosomal protein uL1 family. Part of the 50S ribosomal subunit.

In terms of biological role, binds directly to 23S rRNA. The L1 stalk is quite mobile in the ribosome, and is involved in E site tRNA release. Functionally, protein L1 is also a translational repressor protein, it controls the translation of the L11 operon by binding to its mRNA. The sequence is that of Large ribosomal subunit protein uL1 from Bacillus cereus (strain G9842).